Consider the following 215-residue polypeptide: MEGRIPLIGEEFPRVEVKTTHGKKVLPDDFRGKWFVLFSHPADFTPVCTTEFVAFQKRYDEFRKLNTELIGLSIDQVFSHIKWIEWIKEKLGVEIEFPVIADDLGEVSRRLGLIHPNKGTNTVRAVFIVDPNGIIRAIVYYPQEVGRNIDEILRAVKALQTSDEKGVAIPANWPSNELINDSVIVPPASSVEEARKRLESKDFECYDWWFCYKKV.

Positions Pro-6–Thr-161 constitute a Thioredoxin domain. Cys-48 acts as the Cysteine sulfenic acid (-SOH) intermediate in catalysis. Position 124 (Arg-124) interacts with substrate. Cys-205 and Cys-211 are oxidised to a cystine.

Belongs to the peroxiredoxin family. Prx6 subfamily. In terms of assembly, homodecamer. Pentamer of dimers that assemble into a ring structure.

It localises to the cytoplasm. It catalyses the reaction a hydroperoxide + [thioredoxin]-dithiol = an alcohol + [thioredoxin]-disulfide + H2O. Its function is as follows. Thiol-specific peroxidase that catalyzes the reduction of hydrogen peroxide and organic hydroperoxides to water and alcohols, respectively. Plays a role in cell protection against oxidative stress by detoxifying peroxides. The chain is Peroxiredoxin from Thermotoga maritima (strain ATCC 43589 / DSM 3109 / JCM 10099 / NBRC 100826 / MSB8).